Consider the following 298-residue polypeptide: Tryptophan 2,3-dioxygenase (298 aa).

Residues 51-55 (FIIQH), Tyr-113, and Arg-117 contribute to the substrate site. Position 240 (His-240) interacts with heme. Substrate is bound at residue Thr-254.

This sequence belongs to the tryptophan 2,3-dioxygenase family. In terms of assembly, homotetramer. The cofactor is heme.

The catalysed reaction is L-tryptophan + O2 = N-formyl-L-kynurenine. It functions in the pathway amino-acid degradation; L-tryptophan degradation via kynurenine pathway; L-kynurenine from L-tryptophan: step 1/2. Functionally, heme-dependent dioxygenase that catalyzes the oxidative cleavage of the L-tryptophan (L-Trp) pyrrole ring and converts L-tryptophan to N-formyl-L-kynurenine. Catalyzes the oxidative cleavage of the indole moiety. The chain is Tryptophan 2,3-dioxygenase from Xanthomonas campestris pv. campestris (strain 8004).